Here is a 261-residue protein sequence, read N- to C-terminus: Phosphatidylglycerol--prolipoprotein diacylglyceryl transferase (261 aa).

A run of 7 helical transmembrane segments spans residues 19–39 (VHWYGLMYLVGFAMAWGLALY), 56–76 (LIFYGALGLIIGGRLGYMLFY), 92–112 (WRGGMSFHGGLIGVIVTTWIF), 126–146 (FVVPLVPLGLAAGRIGNFING), 173–193 (QLYEFLLEGALLFIVIWWFSA), 199–219 (FAVSSLFLLCYGLFRFTAEFF), and 227–247 (GFVAFGWLTRGQELSLPMIII). Arginine 139 lines the a 1,2-diacyl-sn-glycero-3-phospho-(1'-sn-glycerol) pocket.

It belongs to the Lgt family.

It localises to the cell inner membrane. The catalysed reaction is L-cysteinyl-[prolipoprotein] + a 1,2-diacyl-sn-glycero-3-phospho-(1'-sn-glycerol) = an S-1,2-diacyl-sn-glyceryl-L-cysteinyl-[prolipoprotein] + sn-glycerol 1-phosphate + H(+). It participates in protein modification; lipoprotein biosynthesis (diacylglyceryl transfer). In terms of biological role, catalyzes the transfer of the diacylglyceryl group from phosphatidylglycerol to the sulfhydryl group of the N-terminal cysteine of a prolipoprotein, the first step in the formation of mature lipoproteins. This Coxiella burnetii (strain Dugway 5J108-111) protein is Phosphatidylglycerol--prolipoprotein diacylglyceryl transferase.